Here is a 230-residue protein sequence, read N- to C-terminus: Demethylmenaquinone methyltransferase (230 aa).

S-adenosyl-L-methionine is bound by residues threonine 57, aspartate 77, 101–102, and serine 118; that span reads DI.

Belongs to the class I-like SAM-binding methyltransferase superfamily. MenG/UbiE family.

The enzyme catalyses a 2-demethylmenaquinol + S-adenosyl-L-methionine = a menaquinol + S-adenosyl-L-homocysteine + H(+). The protein operates within quinol/quinone metabolism; menaquinone biosynthesis; menaquinol from 1,4-dihydroxy-2-naphthoate: step 2/2. Functionally, methyltransferase required for the conversion of demethylmenaquinol (DMKH2) to menaquinol (MKH2). This chain is Demethylmenaquinone methyltransferase, found in Chlamydia felis (strain Fe/C-56) (Chlamydophila felis).